A 612-amino-acid polypeptide reads, in one-letter code: MALWFVLLWVSSLQYAEVEAFFDWLKKADPAPTPPPAESIVPILLHGEAPAFEMSVVDEKFLAEAKQMELSPLDSCHFRVVAQLKATCSGLSEEQLAKLGVALFNCQSEVEGRRTYPCTEEMSIKECTADMDSDTWNAYHIVSNRARSVCYATRQQHFRKRAELTVNALISTATSQLDAMKDLKEGQKELRDMTAASLDKLLEGHGALQIQQGALKEGQEQLDASISENLQRLAQEKALISTGQQLVAQLIQGITQRMENVSGQLKDQTAEVQEGHQAILEDLAVVRGSAQDIYEKMELNLNGFLQQQNTTAHFYTELMRKLELMNGTLGYMLTYLDNMQTRLEDRLHMIQGYLGWAGLSLRALWTCVMHAGYFLLCAVLLSFLQCTTFSRVTLLLSVPINAIAEINQQAALDLISLTLLLFTLSLGRWFVLQLLWALSKIKGRTCSRPPHLSIYPPKEKTPEKQHEFGEKCPASSSTPVQSDPVCDLEVESFMMGDPCVLGVSPSRCPPKFSHHHLGGTPNHSTPRLKSRHSIAATELDNIPQRNLGVFLETVNRSRSSSPNQSLASSSSFSGRSLCSGITRLGQPCKKRAVVGQDYCRVHEGGHTSYSRL.

The first 20 residues, 1 to 20 (MALWFVLLWVSSLQYAEVEA), serve as a signal peptide directing secretion. 2 helical membrane-spanning segments follow: residues 364 to 384 (LWTCVMHAGYFLLCAVLLSFL) and 417 to 437 (LTLLLFTLSLGRWFVLQLLWA). Disordered stretches follow at residues 452 to 476 (LSIYPPKEKTPEKQHEFGEKCPASS) and 555 to 574 (NRSRSSSPNQSLASSSSFSG). The segment covering 457–470 (PKEKTPEKQHEFGE) has biased composition (basic and acidic residues). Residues 556 to 574 (RSRSSSPNQSLASSSSFSG) are compositionally biased toward low complexity.

It is found in the nucleus membrane. Functionally, required for nuclear membrane fusion during karyogamy. The protein is Protein brambleberry (bmb) of Danio rerio (Zebrafish).